The following is a 106-amino-acid chain: Large ribosomal subunit protein uL24 (106 aa).

Belongs to the universal ribosomal protein uL24 family. As to quaternary structure, part of the 50S ribosomal subunit.

One of two assembly initiator proteins, it binds directly to the 5'-end of the 23S rRNA, where it nucleates assembly of the 50S subunit. In terms of biological role, one of the proteins that surrounds the polypeptide exit tunnel on the outside of the subunit. The chain is Large ribosomal subunit protein uL24 from Syntrophus aciditrophicus (strain SB).